Here is a 452-residue protein sequence, read N- to C-terminus: Trigger factor (452 aa).

Residues 162-247 form the PPIase FKBP-type domain; it reads GDTVTIDYKG…IHEVKSKQLP (86 aa). The interval 427 to 452 is disordered; sequence AKAKLEAKEAEEAEDKEEAEDKKENK.

The protein belongs to the FKBP-type PPIase family. Tig subfamily.

It is found in the cytoplasm. It carries out the reaction [protein]-peptidylproline (omega=180) = [protein]-peptidylproline (omega=0). In terms of biological role, involved in protein export. Acts as a chaperone by maintaining the newly synthesized protein in an open conformation. Functions as a peptidyl-prolyl cis-trans isomerase. This is Trigger factor from Lactobacillus helveticus (strain DPC 4571).